We begin with the raw amino-acid sequence, 151 residues long: Caveolin-3 (151 aa).

Over 1-83 the chain is Cytoplasmic; the sequence is MMTEEHTDLE…RLLSTLLGVP (83 aa). Lysine 38 is covalently cross-linked (Glycyl lysine isopeptide (Lys-Gly) (interchain with G-Cter in SUMO3)). Residues 64–114 are required for interaction with DAG1; it reads TFTVSKYWCYRLLSTLLGVPLALLWGFLFACISFCHIWAVVPCIKSYLIEI. The segment at residues 84 to 104 is an intramembrane region (helical); the sequence is LALLWGFLFACISFCHIWAVV. The Cytoplasmic portion of the chain corresponds to 105–151; the sequence is PCIKSYLIEIQCISHIYSLCIRTFCNPLFAALGQVCSNIKVVLRREG.

Belongs to the caveolin family. In terms of assembly, homooligomer. Interacts with DYSF. Interacts with DLG1 and KCNA5; forms a ternary complex. Interacts with DAG1 (via its C-terminal); the interaction prevents binding of DAG1 with DMD. Interacts with TRIM72. Interacts with MUSK; may regulate MUSK signaling. Interacts with POPDC1. Interacts with CAVIN1, CAVIN2 and CAVIN4. Post-translationally, sumoylation with SUMO3 by PIAS4 may reduce agonist-induced internalization and desensitization of adrenergic receptor ABRD2. As to expression, expressed predominantly in muscle.

Its subcellular location is the golgi apparatus membrane. The protein localises to the cell membrane. It localises to the membrane. It is found in the caveola. The protein resides in the sarcolemma. In terms of biological role, may act as a scaffolding protein within caveolar membranes. Interacts directly with G-protein alpha subunits and can functionally regulate their activity. May also regulate voltage-gated potassium channels. Plays a role in the sarcolemma repair mechanism of both skeletal muscle and cardiomyocytes that permits rapid resealing of membranes disrupted by mechanical stress. Mediates the recruitment of CAVIN2 and CAVIN3 proteins to the caveolae. This is Caveolin-3 from Mus musculus (Mouse).